Consider the following 917-residue polypeptide: Probable dipeptidyl-aminopeptidase B (917 aa).

Basic and acidic residues predominate over residues 1–16; the sequence is MATEKGHGRDDEERVP. The segment at 1–21 is disordered; that stretch reads MATEKGHGRDDEERVPLTRGS. Residues 1-99 lie on the Cytoplasmic side of the membrane; that stretch reads MATEKGHGRD…KPMHKSVKIA (99 aa). A helical; Signal-anchor for type II membrane protein transmembrane segment spans residues 100–120; the sequence is LWTLLFLSLGGWSLAFVLFIF. Over 121–917 the chain is Vacuolar; the sequence is RSHDTYETPI…RAATWAGLSI (797 aa). Asn135, Asn351, and Asn574 each carry an N-linked (GlcNAc...) asparagine glycan. Ser756 serves as the catalytic Charge relay system. N-linked (GlcNAc...) asparagine glycosylation occurs at Asn815. Catalysis depends on charge relay system residues Asp833 and His866. Asn902 is a glycosylation site (N-linked (GlcNAc...) asparagine).

This sequence belongs to the peptidase S9B family.

Its subcellular location is the vacuole membrane. It carries out the reaction Release of an N-terminal dipeptide, Xaa-Yaa-|-Zaa-, from a polypeptide, preferentially when Yaa is Pro, provided Zaa is neither Pro nor hydroxyproline.. In terms of biological role, type IV dipeptidyl-peptidase which removes N-terminal dipeptides sequentially from polypeptides having unsubstituted N-termini provided that the penultimate residue is proline. The chain is Probable dipeptidyl-aminopeptidase B (DAPB) from Ajellomyces capsulatus (strain H88) (Darling's disease fungus).